The primary structure comprises 404 residues: 2,3-bisphosphoglycerate-independent phosphoglycerate mutase (404 aa).

The tract at residues 155–183 is disordered; it reads LSDMIGDSDPHREGLPPEKIRPTDPSGDR. The segment covering 162–183 has biased composition (basic and acidic residues); that stretch reads SDPHREGLPPEKIRPTDPSGDR.

Belongs to the BPG-independent phosphoglycerate mutase family. A-PGAM subfamily.

The catalysed reaction is (2R)-2-phosphoglycerate = (2R)-3-phosphoglycerate. Its pathway is carbohydrate degradation; glycolysis; pyruvate from D-glyceraldehyde 3-phosphate: step 3/5. Catalyzes the interconversion of 2-phosphoglycerate and 3-phosphoglycerate. This chain is 2,3-bisphosphoglycerate-independent phosphoglycerate mutase, found in Thermoplasma acidophilum (strain ATCC 25905 / DSM 1728 / JCM 9062 / NBRC 15155 / AMRC-C165).